The sequence spans 443 residues: Xaa-Pro dipeptidase (443 aa).

5 residues coordinate Mn(2+): Asp241, Asp252, His333, Glu378, and Glu417.

This sequence belongs to the peptidase M24B family. Bacterial-type prolidase subfamily. It depends on Mn(2+) as a cofactor.

The catalysed reaction is Xaa-L-Pro dipeptide + H2O = an L-alpha-amino acid + L-proline. Functionally, splits dipeptides with a prolyl residue in the C-terminal position. The sequence is that of Xaa-Pro dipeptidase from Actinobacillus pleuropneumoniae serotype 5b (strain L20).